The primary structure comprises 291 residues: tRNA dimethylallyltransferase (291 aa).

ATP is bound at residue 9 to 16; sequence GPTASGKT. 11–16 lines the substrate pocket; that stretch reads TASGKT. An interaction with substrate tRNA region spans residues 34 to 37; the sequence is DSLQ.

It belongs to the IPP transferase family. As to quaternary structure, monomer. It depends on Mg(2+) as a cofactor.

The catalysed reaction is adenosine(37) in tRNA + dimethylallyl diphosphate = N(6)-dimethylallyladenosine(37) in tRNA + diphosphate. Functionally, catalyzes the transfer of a dimethylallyl group onto the adenine at position 37 in tRNAs that read codons beginning with uridine, leading to the formation of N6-(dimethylallyl)adenosine (i(6)A). The protein is tRNA dimethylallyltransferase of Aster yellows witches'-broom phytoplasma (strain AYWB).